A 104-amino-acid polypeptide reads, in one-letter code: Integration host factor subunit alpha (104 aa).

Belongs to the bacterial histone-like protein family. In terms of assembly, heterodimer of an alpha and a beta chain.

Its function is as follows. This protein is one of the two subunits of integration host factor, a specific DNA-binding protein that functions in genetic recombination as well as in transcriptional and translational control. In Bartonella quintana (strain Toulouse) (Rochalimaea quintana), this protein is Integration host factor subunit alpha.